The chain runs to 355 residues: Protein pelota homolog (355 aa).

Belongs to the eukaryotic release factor 1 family. Pelota subfamily. In terms of assembly, monomer. The cofactor is a divalent metal cation.

The protein resides in the cytoplasm. Its function is as follows. May function in recognizing stalled ribosomes, interact with stem-loop structures in stalled mRNA molecules, and effect endonucleolytic cleavage of the mRNA. May play a role in the release non-functional ribosomes and degradation of damaged mRNAs. Has endoribonuclease activity. The polypeptide is Protein pelota homolog (Haloarcula marismortui (strain ATCC 43049 / DSM 3752 / JCM 8966 / VKM B-1809) (Halobacterium marismortui)).